A 72-amino-acid polypeptide reads, in one-letter code: Translation initiation factor IF-1 (72 aa).

Residues 1–72 (MAKEENIEMQ…SKGRIIFRAR (72 aa)) form the S1-like domain.

The protein belongs to the IF-1 family. As to quaternary structure, component of the 30S ribosomal translation pre-initiation complex which assembles on the 30S ribosome in the order IF-2 and IF-3, IF-1 and N-formylmethionyl-tRNA(fMet); mRNA recruitment can occur at any time during PIC assembly.

It localises to the cytoplasm. One of the essential components for the initiation of protein synthesis. Stabilizes the binding of IF-2 and IF-3 on the 30S subunit to which N-formylmethionyl-tRNA(fMet) subsequently binds. Helps modulate mRNA selection, yielding the 30S pre-initiation complex (PIC). Upon addition of the 50S ribosomal subunit IF-1, IF-2 and IF-3 are released leaving the mature 70S translation initiation complex. The polypeptide is Translation initiation factor IF-1 (Colwellia psychrerythraea (strain 34H / ATCC BAA-681) (Vibrio psychroerythus)).